A 247-amino-acid polypeptide reads, in one-letter code: Exosome complex component Rrp4 (247 aa).

The 74-residue stretch at 75–148 (DDLVIGIVEN…RDPVITVKGK (74 aa)) folds into the S1 motif domain. Residues 154–220 (TEGVVVDVKP…QAIKLIELKA (67 aa)) enclose the KH domain.

The protein belongs to the RRP4 family. In terms of assembly, component of the archaeal exosome complex. Forms a trimer of Rrp4 and/or Csl4 subunits. The trimer associates with a hexameric ring-like arrangement composed of 3 Rrp41-Rrp42 heterodimers.

Its subcellular location is the cytoplasm. In terms of biological role, non-catalytic component of the exosome, which is a complex involved in RNA degradation. Increases the RNA binding and the efficiency of RNA degradation. Confers strong poly(A) specificity to the exosome. The protein is Exosome complex component Rrp4 of Thermosphaera aggregans (strain DSM 11486 / M11TL).